The sequence spans 455 residues: Chromosomal replication initiator protein DnaA (455 aa).

Residues 1-77 (MASLNENQKF…GFEVFGRMID (77 aa)) form a domain I, interacts with DnaA modulators region. Positions 77 to 116 (DYELYANDELTELELHRLNNQSSIEEQPRSTAKPASPLVS) are domain II. Residues 117-333 (GLNEKYNFEN…GALNRVEFVA (217 aa)) form a domain III, AAA+ region region. ATP is bound by residues Gly161, Gly163, Lys164, and Thr165. The interval 334-455 (RANGIAVVDI…KDIDSIKRKF (122 aa)) is domain IV, binds dsDNA.

This sequence belongs to the DnaA family. In terms of assembly, oligomerizes as a right-handed, spiral filament on DNA at oriC.

It is found in the cytoplasm. Its function is as follows. Plays an essential role in the initiation and regulation of chromosomal replication. ATP-DnaA binds to the origin of replication (oriC) to initiate formation of the DNA replication initiation complex once per cell cycle. Binds the DnaA box (a 9 base pair repeat at the origin) and separates the double-stranded (ds)DNA. Forms a right-handed helical filament on oriC DNA; dsDNA binds to the exterior of the filament while single-stranded (ss)DNA is stabiized in the filament's interior. The ATP-DnaA-oriC complex binds and stabilizes one strand of the AT-rich DNA unwinding element (DUE), permitting loading of DNA polymerase. After initiation quickly degrades to an ADP-DnaA complex that is not apt for DNA replication. Binds acidic phospholipids. In Lactococcus lactis subsp. lactis (strain IL1403) (Streptococcus lactis), this protein is Chromosomal replication initiator protein DnaA.